We begin with the raw amino-acid sequence, 192 residues long: MAHTLPPLPYALDALAPRISKETLEFHYGKHHQTYVTNLNNLIPGTEFENLSLEEIVKKSSGGVFNNAAQVWNHTFYWNSLSPNGGGEPSGALADAIKAKWGSVDAFKEAFNKSAAGNFGSGWTWLVKKADGTLDIVNTSNAATPLTTADKALLTCDVWEHAYYIDYRNARPKYLENFWALVNWEFAAKNFA.

Fe cation is bound by residues histidine 27, histidine 74, aspartate 157, and histidine 161.

This sequence belongs to the iron/manganese superoxide dismutase family. As to quaternary structure, homodimer. Fe cation serves as cofactor.

The enzyme catalyses 2 superoxide + 2 H(+) = H2O2 + O2. Its function is as follows. Destroys superoxide anion radicals which are normally produced within the cells and which are toxic to biological systems. This chain is Superoxide dismutase [Fe] (sodB), found in Bordetella pertussis (strain Tohama I / ATCC BAA-589 / NCTC 13251).